The primary structure comprises 535 residues: Dual specificity calcium/calmodulin-dependent 3',5'-cyclic nucleotide phosphodiesterase 1B (535 aa).

The tract at residues 1-21 is disordered; the sequence is MELSPRSPPEMLESDCPSPLE. Phosphoserine occurs at positions 7 and 14. Calmodulin-binding stretches follow at residues 27-47 and 117-140; these read SKKM…QLEN and EKPK…MFRR. Residues 145-502 form the PDEase domain; that stretch reads VGPTYSTAVH…QKWKERAASG (358 aa). The Proton donor role is filled by His222. The Zn(2+) site is built by His226, His262, Asp263, and Asp369. Asp263 provides a ligand contact to Mg(2+). Disordered regions lie at residues 444–474 and 495–535; these read QPLA…GDPN and WKER…GNLD. Positions 454–463 are enriched in polar residues; sequence KSQPSFQWRQ. Residues Ser465 and Ser513 each carry the phosphoserine modification.

It belongs to the cyclic nucleotide phosphodiesterase family. PDE1 subfamily. Homodimer. The cofactor is Zn(2+). It depends on Mg(2+) as a cofactor.

Its subcellular location is the cytoplasm. The protein resides in the cytosol. It catalyses the reaction a nucleoside 3',5'-cyclic phosphate + H2O = a nucleoside 5'-phosphate + H(+). It carries out the reaction 3',5'-cyclic GMP + H2O = GMP + H(+). The enzyme catalyses 3',5'-cyclic AMP + H2O = AMP + H(+). Type I PDE are activated by the binding of calmodulin in the presence of Ca(2+). Cyclic nucleotide phosphodiesterase with a dual specificity for the second messengers cAMP and cGMP, which are key regulators of many important physiological processes. Has a preference for cGMP as a substrate. The sequence is that of Dual specificity calcium/calmodulin-dependent 3',5'-cyclic nucleotide phosphodiesterase 1B from Mus musculus (Mouse).